A 318-amino-acid polypeptide reads, in one-letter code: Methionyl-tRNA formyltransferase (318 aa).

117 to 120 (SLLP) serves as a coordination point for (6S)-5,6,7,8-tetrahydrofolate.

It belongs to the Fmt family.

It catalyses the reaction L-methionyl-tRNA(fMet) + (6R)-10-formyltetrahydrofolate = N-formyl-L-methionyl-tRNA(fMet) + (6S)-5,6,7,8-tetrahydrofolate + H(+). Its function is as follows. Attaches a formyl group to the free amino group of methionyl-tRNA(fMet). The formyl group appears to play a dual role in the initiator identity of N-formylmethionyl-tRNA by promoting its recognition by IF2 and preventing the misappropriation of this tRNA by the elongation apparatus. The sequence is that of Methionyl-tRNA formyltransferase from Malacoplasma penetrans (strain HF-2) (Mycoplasma penetrans).